We begin with the raw amino-acid sequence, 399 residues long: Methylthioribose kinase (399 aa).

Residues asparagine 40, lysine 57, and 111–113 each bind ATP; that span reads EDL. Aspartate 229 is a binding site for substrate. 246 to 248 lines the ATP pocket; sequence DAE. Arginine 344 is a binding site for substrate.

It belongs to the methylthioribose kinase family. In terms of assembly, homodimer.

The catalysed reaction is 5-(methylsulfanyl)-D-ribose + ATP = 5-(methylsulfanyl)-alpha-D-ribose 1-phosphate + ADP + H(+). Its pathway is amino-acid biosynthesis; L-methionine biosynthesis via salvage pathway; S-methyl-5-thio-alpha-D-ribose 1-phosphate from S-methyl-5'-thioadenosine (hydrolase route): step 2/2. Catalyzes the phosphorylation of methylthioribose into methylthioribose-1-phosphate. This is Methylthioribose kinase from Klebsiella pneumoniae subsp. pneumoniae (strain ATCC 700721 / MGH 78578).